The primary structure comprises 152 residues: MASGVKVDPSCKNAYDLLHNKHQHSYIIFKIDKNDTAIVVEKVGEKNAPYAEFVEEMKKLVEDGKECRYAAVDVEVTVQRQGAEGTSTLNKVIFVQYCPDNAPVRRRMLYASSVRALKASLGLESLFQVQASEMSDLDEKSVKSDLMSNQRI.

The 144-residue stretch at 4–147 (GVKVDPSCKN…DEKSVKSDLM (144 aa)) folds into the ADF-H domain.

This sequence belongs to the actin-binding proteins ADF family.

Depolymerizes growing actin filaments in muscle cells; required for the assembly of actin filaments into the functional contractile myofilament lattice of muscle. This is Actin-depolymerizing factor 2, isoform c from Caenorhabditis elegans.